The primary structure comprises 382 residues: Chaperone protein DnaJ (382 aa).

The region spanning 6–70 (DYYEILGLPK…EKRAQYDRFG (65 aa)) is the J domain. Residues 131–213 (GVRKDIDIPR…CGGAGRVRNK (83 aa)) form a CR-type zinc finger. Residues cysteine 144, cysteine 147, cysteine 161, cysteine 164, cysteine 187, cysteine 190, cysteine 201, and cysteine 204 each contribute to the Zn(2+) site. 4 CXXCXGXG motif repeats span residues 144 to 151 (CSTCSGTG), 161 to 168 (CPTCGGTG), 187 to 194 (CSTCHGRG), and 201 to 208 (CPVCGGAG). The segment at 146–168 (TCSGTGAKPGTSPKRCPTCGGTG) is disordered. The tract at residues 348–382 (FENLSKGKKPQEEEKSKAEKHKKGIFEKVKDAFES) is disordered. The segment covering 371–382 (GIFEKVKDAFES) has biased composition (basic and acidic residues).

This sequence belongs to the DnaJ family. Homodimer. The cofactor is Zn(2+).

The protein resides in the cytoplasm. Functionally, participates actively in the response to hyperosmotic and heat shock by preventing the aggregation of stress-denatured proteins and by disaggregating proteins, also in an autonomous, DnaK-independent fashion. Unfolded proteins bind initially to DnaJ; upon interaction with the DnaJ-bound protein, DnaK hydrolyzes its bound ATP, resulting in the formation of a stable complex. GrpE releases ADP from DnaK; ATP binding to DnaK triggers the release of the substrate protein, thus completing the reaction cycle. Several rounds of ATP-dependent interactions between DnaJ, DnaK and GrpE are required for fully efficient folding. Also involved, together with DnaK and GrpE, in the DNA replication of plasmids through activation of initiation proteins. This is Chaperone protein DnaJ from Methanosarcina acetivorans (strain ATCC 35395 / DSM 2834 / JCM 12185 / C2A).